Reading from the N-terminus, the 635-residue chain is Threonine--tRNA ligase (635 aa).

The TGS domain maps to 1–61; it reads MIKITLKDGK…HKDSSLEILT (61 aa). The tract at residues 242–532 is catalytic; it reads DHRKLGKELD…LIEQYAGAFP (291 aa). 3 residues coordinate Zn(2+): C333, H384, and H509.

The protein belongs to the class-II aminoacyl-tRNA synthetase family. As to quaternary structure, homodimer. It depends on Zn(2+) as a cofactor.

The protein resides in the cytoplasm. It catalyses the reaction tRNA(Thr) + L-threonine + ATP = L-threonyl-tRNA(Thr) + AMP + diphosphate + H(+). In terms of biological role, catalyzes the attachment of threonine to tRNA(Thr) in a two-step reaction: L-threonine is first activated by ATP to form Thr-AMP and then transferred to the acceptor end of tRNA(Thr). Also edits incorrectly charged L-seryl-tRNA(Thr). The polypeptide is Threonine--tRNA ligase (Clostridium botulinum (strain 657 / Type Ba4)).